Consider the following 70-residue polypeptide: Probable tautomerase RSp0893 (70 aa).

The active-site Proton acceptor; via imino nitrogen is P2.

This sequence belongs to the 4-oxalocrotonate tautomerase family.

The sequence is that of Probable tautomerase RSp0893 from Ralstonia nicotianae (strain ATCC BAA-1114 / GMI1000) (Ralstonia solanacearum).